A 144-amino-acid polypeptide reads, in one-letter code: Large ribosomal subunit protein uL16 (144 aa).

Basic residues predominate over residues 1-14 (MLTPKRVKHRKQHR). Residues 1–22 (MLTPKRVKHRKQHRPSLAGKAN) are disordered.

Belongs to the universal ribosomal protein uL16 family. Part of the 50S ribosomal subunit.

Functionally, binds 23S rRNA and is also seen to make contacts with the A and possibly P site tRNAs. This is Large ribosomal subunit protein uL16 from Syntrophomonas wolfei subsp. wolfei (strain DSM 2245B / Goettingen).